Reading from the N-terminus, the 617-residue chain is Putative type VI secretion system protein VgrGA (617 aa).

Disordered regions lie at residues 325–344 (GQQP…TLSN) and 449–469 (RTFH…TRTS).

Belongs to the VgrG protein family.

Its function is as follows. A Vgr protein that is probably part of a type VI secretion system (T6SS). May be required for export of proteins involved in Rhs-mediated cellular contact-dependent growth inhibition (CDI). The chain is Putative type VI secretion system protein VgrGA (vgrGA) from Dickeya dadantii (strain 3937) (Erwinia chrysanthemi (strain 3937)).